A 138-amino-acid polypeptide reads, in one-letter code: L-ectoine synthase (138 aa).

Belongs to the ectoine synthase family.

The catalysed reaction is (2S)-4-acetamido-2-aminobutanoate = L-ectoine + H2O. Its pathway is amine and polyamine biosynthesis; ectoine biosynthesis; L-ectoine from L-aspartate 4-semialdehyde: step 3/3. Functionally, catalyzes the circularization of gamma-N-acetyl-alpha,gamma-diaminobutyric acid (ADABA) to ectoine (1,4,5,6-tetrahydro-2-methyl-4-pyrimidine carboxylic acid), which is an excellent osmoprotectant. This chain is L-ectoine synthase, found in Vibrio cholerae serotype O1 (strain ATCC 39541 / Classical Ogawa 395 / O395).